A 160-amino-acid polypeptide reads, in one-letter code: Peptide deformylase 1 (160 aa).

2 residues coordinate Fe cation: Cys90 and His132. The active site involves Glu133. His136 is a Fe cation binding site.

It belongs to the polypeptide deformylase family. Fe(2+) is required as a cofactor.

It catalyses the reaction N-terminal N-formyl-L-methionyl-[peptide] + H2O = N-terminal L-methionyl-[peptide] + formate. In terms of biological role, removes the formyl group from the N-terminal Met of newly synthesized proteins. Requires at least a dipeptide for an efficient rate of reaction. N-terminal L-methionine is a prerequisite for activity but the enzyme has broad specificity at other positions. The chain is Peptide deformylase 1 (defA) from Bacillus subtilis (strain 168).